The following is a 540-amino-acid chain: Phosphatidylinositol 4-phosphate 5-kinase type-1 beta (540 aa).

The disordered stretch occupies residues 1–23 (MSSVTENGDVTAGKPNEEKTYKK). The region spanning 25–395 (TSSAIKGAIQ…RFLKFMNTRV (371 aa)) is the PIPK domain.

The protein resides in the cytoplasm. Its subcellular location is the cytosol. It localises to the cell membrane. It is found in the endomembrane system. The catalysed reaction is a 1,2-diacyl-sn-glycero-3-phospho-(1D-myo-inositol 4-phosphate) + ATP = a 1,2-diacyl-sn-glycero-3-phospho-(1D-myo-inositol-4,5-bisphosphate) + ADP + H(+). It carries out the reaction 1-octadecanoyl-2-(5Z,8Z,11Z,14Z)-eicosatetraenoyl-sn-glycero-3-phospho-1D-myo-inositol 4-phosphate + ATP = 1-octadecanoyl-2-(5Z,8Z,11Z,14Z)-eicosatetraenoyl-sn-glycero-3-phospho-1D-myo-inositol 4,5-bisphosphate + ADP + H(+). It catalyses the reaction 1-octadecanoyl-2-(9Z)-octadecenoyl-sn-glycero-3-phospho-1D-myo-inositol 4-phosphate + ATP = 1-octadecanoyl-2-(9Z)-octadecenoyl-sn-glycero-3-phospho-1D-myo-inositol 4,5-bisphosphate + ADP + H(+). The enzyme catalyses 1-octadecanoyl-2-(9Z)-octadecenoyl-sn-glycero-3-phospho-1D-myo-inositol + ATP = 1-octadecanoyl-2-(9Z)-octadecenoyl-sn-glycero-3-phospho-1D-myo-inositol 5-phosphate + ADP + H(+). The catalysed reaction is 1-octadecanoyl-2-(9Z,12Z)-octadecadienoyl-sn-glycero-3-phospho-1D-myo-inositol + ATP = 1-octadecanoyl-2-(9Z,12Z)-octadecadienoyl-sn-glycero-3-phospho-1D-myo-inositol 5-phosphate + ADP + H(+). It carries out the reaction 1-octadecanoyl-2-(5Z,8Z,11Z,14Z-eicosatetraenoyl)-sn-glycero-3-phospho-(1D-myo-inositol) + ATP = 1-octadecanoyl-2-(5Z,8Z,11Z,14Z)-eicosatetraenoyl-sn-glycero-3-phospho-1D-myo-inositol 5-phosphate + ADP + H(+). It catalyses the reaction 1,2-di-(9Z,12Z)-octadecadienoyl-sn-glycero-3-phospho-1D-myo-inositol + ATP = 1,2-di(9Z,12Z)-octadecadienoyl-sn-glycero-3-phospho-1D-myo-inositol 5-phosphate + ADP + H(+). Catalyzes the phosphorylation of phosphatidylinositol 4-phosphate (PtdIns(4)P/PI4P) to form phosphatidylinositol 4,5-bisphosphate (PtdIns(4,5)P2/PIP2), a lipid second messenger that regulates several cellular processes such as signal transduction, vesicle trafficking, actin cytoskeleton dynamics, cell adhesion, and cell motility. PtdIns(4,5)P2 can directly act as a second messenger or can be utilized as a precursor to generate other second messengers: inositol 1,4,5-trisphosphate (IP3), diacylglycerol (DAG) or phosphatidylinositol-3,4,5-trisphosphate (PtdIns(3,4,5)P3/PIP3). This Gallus gallus (Chicken) protein is Phosphatidylinositol 4-phosphate 5-kinase type-1 beta (PIP5K1B).